A 221-amino-acid chain; its full sequence is Transmembrane protein 225B (221 aa).

A run of 4 transmembrane segments spans residues 14-34 (WAIVPALTSLGYLIILVVSIF), 77-97 (VFLLSAVFLAFVTTFIMMPFA), 109-129 (FVLACISFFTGACAFLALVLH), and 147-167 (VLWPYYVLGFGIFLFIVAGTI).

The protein resides in the membrane. The sequence is that of Transmembrane protein 225B from Homo sapiens (Human).